A 495-amino-acid chain; its full sequence is Alpha,alpha-trehalose-phosphate synthase [UDP-forming] 56 kDa subunit (495 aa).

D-glucose 6-phosphate is bound by residues Y102 and D156. UDP contacts are provided by R293 and K298. UDP-alpha-D-glucose is bound by residues R293 and K298. R331 is a binding site for D-glucose 6-phosphate. UDP is bound by residues I370 and 396–400 (LVSYE). UDP-alpha-D-glucose is bound by residues I370 and 392 to 400 (DGMNLVSYE).

This sequence belongs to the glycosyltransferase 20 family. In terms of assembly, the trehalose synthase complex is composed of the two catalytic subunits TPS1 and TPS2 and at least one of the two regulatory subunits TPS3 or TSL1.

The protein localises to the cytoplasm. It carries out the reaction D-glucose 6-phosphate + UDP-alpha-D-glucose = alpha,alpha-trehalose 6-phosphate + UDP + H(+). It functions in the pathway carbohydrate biosynthesis. Activated by fructose 6-phosphate. Inorganic phosphate inhibits the synthase activity in the complex, but activates the synthase activity in the free monomeric form. Functionally, synthase catalytic subunit of the trehalose synthase complex that catalyzes the production of trehalose from glucose-6-phosphate and UDP-alpha-D-glucose in a two step process. Can function independently of the complex. The polypeptide is Alpha,alpha-trehalose-phosphate synthase [UDP-forming] 56 kDa subunit (Saccharomyces cerevisiae (strain ATCC 204508 / S288c) (Baker's yeast)).